The sequence spans 755 residues: MSTKPSNVVFNIDEEFGITEAIATIDNGDFGKRTIRFETGQLARQADGSVTTYLDDDTMLLATTTASNQPREGFDFFPLTVDVEERMYAAGRIPGSFFRREGRPSTEAILACRLIDRPLRPTFVKGLRNEVQVVITVLSVNPQDMYDVVAINGASAATQLSGLPVSGPVGGVRMALIADDAHPKGQWIAFPTHEQHEQALFELVVAGRIVSKKQGKKTVDDVAIMMVEAGATEQVVDRVKAGAPAPTESVVAEGLEAAKPFIEVLCRAQAGLAERAAKETQEFPLFPPYTDVVYDAVEKKVSKKLRSLLTIKSKQDRDEATNAYMEEIEADLIAQLGSDDEAAASKAIRAAYNAVMKKIVRHMILTEHFRIDGRGVTDIRDLGVEVDLIPRAHGSSLFERGETQILGVTTLDMLKMEQQIDSLTPATSKRYIHHYNFPPYSTGETGRVGSPKRREIGHGALAERALVPVIPSREEFPYAIRQVSEALGSNGSTSMGSVCASTLSLYNAGVPLKAPVAGIAMGLVSDEVDGETRYVALTDILGAEDAFGDMDFKVAGTRQFITALQLDTKLDGIPSEVLAQALSQANDARNTILDTMAEVIETPDEMSDYAPRITAITVPVNKIGEVIGPKGKTINSITEETGANISIEEDGTVYVSAASGAAAEAAIEKINAIANPQLPKVGERFLGTVVKTTAFGAFVSLLPGRDGLVHISKLGGGKRIEKVEDVVNVGDKLEVEILDIDNRGKISLAPVKNED.

Asp545 and Asp551 together coordinate Mg(2+). In terms of domain architecture, KH spans 611-670 (PRITAITVPVNKIGEVIGPKGKTINSITEETGANISIEEDGTVYVSAASGAAAEAAIEKI). The 70-residue stretch at 682-751 (GERFLGTVVK…NRGKISLAPV (70 aa)) folds into the S1 motif domain.

The protein belongs to the polyribonucleotide nucleotidyltransferase family. Mg(2+) serves as cofactor.

Its subcellular location is the cytoplasm. It catalyses the reaction RNA(n+1) + phosphate = RNA(n) + a ribonucleoside 5'-diphosphate. Its function is as follows. Involved in mRNA degradation. Catalyzes the phosphorolysis of single-stranded polyribonucleotides processively in the 3'- to 5'-direction. The sequence is that of Polyribonucleotide nucleotidyltransferase from Corynebacterium diphtheriae (strain ATCC 700971 / NCTC 13129 / Biotype gravis).